The sequence spans 248 residues: Probable transcriptional regulatory protein RHOS4_22610 (248 aa).

Residues 1-21 (MAGHSKWANIQHRKGKQDKLR) are disordered.

The protein belongs to the TACO1 family.

The protein localises to the cytoplasm. The chain is Probable transcriptional regulatory protein RHOS4_22610 from Cereibacter sphaeroides (strain ATCC 17023 / DSM 158 / JCM 6121 / CCUG 31486 / LMG 2827 / NBRC 12203 / NCIMB 8253 / ATH 2.4.1.) (Rhodobacter sphaeroides).